Consider the following 156-residue polypeptide: Small ribosomal subunit protein uS7 (156 aa).

Belongs to the universal ribosomal protein uS7 family. In terms of assembly, part of the 30S ribosomal subunit. Contacts proteins S9 and S11.

One of the primary rRNA binding proteins, it binds directly to 16S rRNA where it nucleates assembly of the head domain of the 30S subunit. Is located at the subunit interface close to the decoding center, probably blocks exit of the E-site tRNA. This is Small ribosomal subunit protein uS7 from Desulforudis audaxviator (strain MP104C).